We begin with the raw amino-acid sequence, 274 residues long: Large ribosomal subunit protein uL2 (274 aa).

Disordered regions lie at residues 28–54 (KPFA…TRHI) and 221–274 (RGTA…RSKK). Polar residues predominate over residues 39–49 (KTGGRNNNGRI).

It belongs to the universal ribosomal protein uL2 family. Part of the 50S ribosomal subunit. Forms a bridge to the 30S subunit in the 70S ribosome.

Its function is as follows. One of the primary rRNA binding proteins. Required for association of the 30S and 50S subunits to form the 70S ribosome, for tRNA binding and peptide bond formation. It has been suggested to have peptidyltransferase activity; this is somewhat controversial. Makes several contacts with the 16S rRNA in the 70S ribosome. The chain is Large ribosomal subunit protein uL2 from Edwardsiella ictaluri (strain 93-146).